Reading from the N-terminus, the 430-residue chain is Trigger factor (430 aa).

Residues aspartate 164–proline 249 enclose the PPIase FKBP-type domain.

This sequence belongs to the FKBP-type PPIase family. Tig subfamily.

The protein resides in the cytoplasm. The catalysed reaction is [protein]-peptidylproline (omega=180) = [protein]-peptidylproline (omega=0). Involved in protein export. Acts as a chaperone by maintaining the newly synthesized protein in an open conformation. Functions as a peptidyl-prolyl cis-trans isomerase. This chain is Trigger factor, found in Anaeromyxobacter sp. (strain Fw109-5).